The sequence spans 147 residues: Putative HTH-type transcriptional regulator slr0846 (147 aa).

The 129-residue stretch at 2 to 130 (KLTTKSHYSV…YSITLADLYY (129 aa)) folds into the HTH rrf2-type domain.

This Synechocystis sp. (strain ATCC 27184 / PCC 6803 / Kazusa) protein is Putative HTH-type transcriptional regulator slr0846.